We begin with the raw amino-acid sequence, 852 residues long: Transient receptor potential cation channel subfamily V member 4 (852 aa).

Residues methionine 1–valine 455 lie on the Cytoplasmic side of the membrane. Residues valine 30 to glutamine 51 are disordered. ATP-binding positions include lysine 178, lysine 183, asparagine 187, tyrosine 222–glutamine 225, and arginine 234. 2 ANK repeats span residues arginine 223–alanine 252 and phenylalanine 270–aspartate 299. Residues arginine 235 to lysine 237, asparagine 282 to histidine 285, and lysine 330 each bind a 1,2-diacyl-sn-glycero-3-phospho-(1D-myo-inositol-4,5-bisphosphate). One copy of the ANK 3 repeat lies at aspartate 355–histidine 387. A helical transmembrane segment spans residues serine 456–tyrosine 476. The Extracellular portion of the chain corresponds to tyrosine 477–aspartate 493. Residues tyrosine 494–methionine 520 form a helical membrane-spanning segment. The Cytoplasmic segment spans residues lysine 521–glycine 533. A helical membrane pass occupies residues serine 534–leucine 554. The Extracellular portion of the chain corresponds to glycine 555–glutamate 558. The chain crosses the membrane as a helical span at residues alanine 559–threonine 579. Residues arginine 580–lysine 594 lie on the Cytoplasmic side of the membrane. A helical transmembrane segment spans residues isoleucine 595–leucine 622. Residues asparagine 623–threonine 651 are Extracellular-facing. The segment at residues phenylalanine 652–methionine 671 is an intramembrane region (pore-forming). The Selectivity filter motif lies at glycine 665–aspartate 668. Aspartate 668 is a binding site for Ca(2+). At leucine 672–glycine 679 the chain is on the extracellular side. Residues valine 680–valine 708 traverse the membrane as a helical segment. At glycine 709 to leucine 852 the chain is on the cytoplasmic side.

This sequence belongs to the transient receptor (TC 1.A.4) family. TrpV subfamily. TRPV4 sub-subfamily. As to quaternary structure, homotetramer. Interacts with Ca(2+)-calmodulin.

Its subcellular location is the apical cell membrane. It is found in the cell junction. It localises to the adherens junction. The enzyme catalyses Ca(2+)(in) = Ca(2+)(out). ATP binding enhances channel sensitivity to agonists. Ca(2+)-calmodulin prevents the ATP-mediated increased sensitivity to agonists. Its function is as follows. Non-selective calcium permeant cation channel involved in osmotic sensitivity and mechanosensitivity. Activation by exposure to hypotonicity within the physiological range exhibits an outward rectification. Also activated by phorbol esters. Channel activity seems to be regulated by a calmodulin-dependent mechanism. This is Transient receptor potential cation channel subfamily V member 4 (TRPV4) from Gallus gallus (Chicken).